Here is a 432-residue protein sequence, read N- to C-terminus: Aspartate aminotransferase (432 aa).

Arginine 45–glycine 46 contributes to the substrate binding site. Serine 109–leucine 111 lines the pyridoxal 5'-phosphate pocket. Tyrosine 148–arginine 150 is a substrate binding site. Residues asparagine 197, tyrosine 229, and serine 262–lysine 265 each bind pyridoxal 5'-phosphate. Arginine 400 provides a ligand contact to substrate.

It belongs to the class-I pyridoxal-phosphate-dependent aminotransferase family. In terms of assembly, homodimer. The cofactor is pyridoxal 5'-phosphate.

It catalyses the reaction L-aspartate + 2-oxoglutarate = oxaloacetate + L-glutamate. The polypeptide is Aspartate aminotransferase (Corynebacterium glutamicum (strain ATCC 13032 / DSM 20300 / JCM 1318 / BCRC 11384 / CCUG 27702 / LMG 3730 / NBRC 12168 / NCIMB 10025 / NRRL B-2784 / 534)).